The chain runs to 383 residues: Succinyl-diaminopimelate desuccinylase (383 aa).

A Zn(2+)-binding site is contributed by His72. Residue Asp74 is part of the active site. Zn(2+) is bound at residue Asp105. The Proton acceptor role is filled by Glu137. Positions 138, 167, and 352 each coordinate Zn(2+).

Belongs to the peptidase M20A family. DapE subfamily. As to quaternary structure, homodimer. Zn(2+) is required as a cofactor. Co(2+) serves as cofactor.

The catalysed reaction is N-succinyl-(2S,6S)-2,6-diaminopimelate + H2O = (2S,6S)-2,6-diaminopimelate + succinate. Its pathway is amino-acid biosynthesis; L-lysine biosynthesis via DAP pathway; LL-2,6-diaminopimelate from (S)-tetrahydrodipicolinate (succinylase route): step 3/3. Functionally, catalyzes the hydrolysis of N-succinyl-L,L-diaminopimelic acid (SDAP), forming succinate and LL-2,6-diaminopimelate (DAP), an intermediate involved in the bacterial biosynthesis of lysine and meso-diaminopimelic acid, an essential component of bacterial cell walls. This is Succinyl-diaminopimelate desuccinylase from Ehrlichia ruminantium (strain Welgevonden).